Consider the following 113-residue polypeptide: Bactofilin BacN (113 aa).

Belongs to the bactofilin family. Interacts with BacO and BacP, the 3 proteins colocalize as an extended structure.

Its subcellular location is the cytoplasm. The protein localises to the cytoskeleton. Its function is as follows. A non-essential component of the chromosome segregation machinery. Positions the ParA-ParB-parS chromosome segregation machinery within the cell; BacP seems to be the most important bactofilin in this process. Forms a heteropolymeric, subpolar scaffold in the cell; BacP probably forms the core, BacO contributes to position and integrity while BacN does not seem to contribute to assembly. This is Bactofilin BacN from Myxococcus xanthus (strain DK1622).